The chain runs to 214 residues: Ribonuclease HII (214 aa).

The RNase H type-2 domain occupies 26 to 214; sequence EIVCGVDEAG…PVRAALDLIR (189 aa). A divalent metal cation-binding residues include D32, E33, and D124.

The protein belongs to the RNase HII family. Requires Mn(2+) as cofactor. Mg(2+) serves as cofactor.

Its subcellular location is the cytoplasm. The enzyme catalyses Endonucleolytic cleavage to 5'-phosphomonoester.. Its function is as follows. Endonuclease that specifically degrades the RNA of RNA-DNA hybrids. This chain is Ribonuclease HII, found in Burkholderia orbicola (strain MC0-3).